Consider the following 570-residue polypeptide: Sulfite reductase [NADPH] hemoprotein beta-component (570 aa).

[4Fe-4S] cluster is bound by residues Cys434, Cys440, Cys479, and Cys483. Residue Cys483 coordinates siroheme.

This sequence belongs to the nitrite and sulfite reductase 4Fe-4S domain family. In terms of assembly, alpha(8)-beta(8). The alpha component is a flavoprotein, the beta component is a hemoprotein. The cofactor is siroheme. [4Fe-4S] cluster serves as cofactor.

The enzyme catalyses hydrogen sulfide + 3 NADP(+) + 3 H2O = sulfite + 3 NADPH + 4 H(+). It participates in sulfur metabolism; hydrogen sulfide biosynthesis; hydrogen sulfide from sulfite (NADPH route): step 1/1. Its function is as follows. Component of the sulfite reductase complex that catalyzes the 6-electron reduction of sulfite to sulfide. This is one of several activities required for the biosynthesis of L-cysteine from sulfate. This chain is Sulfite reductase [NADPH] hemoprotein beta-component, found in Shigella flexneri.